The chain runs to 105 residues: 5,5'-dehydrodivanillate O-demethylase ferredoxin subunit (105 aa).

One can recognise a 2Fe-2S ferredoxin-type domain in the interval 2 to 105 (AQLKVVTRDG…GMTVTIAPED (104 aa)). Cys-40, Cys-46, Cys-49, and Cys-86 together coordinate [2Fe-2S] cluster.

Belongs to the adrenodoxin/putidaredoxin family. As to quaternary structure, monomer. The three-component monooxygenase is composed of an oxygenase (LigXa), a ferredoxin (LigXc) and a ferredoxin reductase (LigXd). [2Fe-2S] cluster serves as cofactor.

The catalysed reaction is 5,5'-dehydrodivanillate + NADH + O2 + H(+) = 2,2',3-trihydroxy-3'-methoxy-5,5'-dicarboxybiphenyl + formaldehyde + NAD(+) + H2O. Functionally, involved in the catabolism of 5,5'-dehydrodivanillate (DDVA), an intermediate in the biodegradation of lignin. Part of a three-component monooxygenase that catalyzes the O-demethylation of DDVA, leading to the formation of 2,2',3-trihydroxy-3'-methoxy-5,5'-dicarboxybiphenyl (OH-DDVA). LigXc probably functions as an intermediate electron transfer protein between LigXd and LigXa. This chain is 5,5'-dehydrodivanillate O-demethylase ferredoxin subunit, found in Sphingobium sp. (strain NBRC 103272 / SYK-6).